We begin with the raw amino-acid sequence, 264 residues long: 3'-5' ssDNA/RNA exonuclease TatD (264 aa).

Positions 92, 128, and 153 each coordinate a divalent metal cation.

The protein belongs to the metallo-dependent hydrolases superfamily. TatD-type hydrolase family. TatD subfamily. As to quaternary structure, monomer. Mg(2+) is required as a cofactor.

The protein resides in the cytoplasm. Its function is as follows. 3'-5' exonuclease that prefers single-stranded DNA and RNA. May play a role in the H(2)O(2)-induced DNA damage repair. The protein is 3'-5' ssDNA/RNA exonuclease TatD of Musicola paradisiaca (strain Ech703) (Dickeya paradisiaca).